The sequence spans 314 residues: MAEEPQRSPAPTSPFAFTVPSNSLSELPDIPPDRPVLIAGPTASGKSALAARLVEDGGGAVVNADALQVYDCWRLLSARPSAAEEAALPHRLYGHVGARQTYSAGHWLKEVAGVLAEGLRPVIVGGTGLYFSALTGGLAEIPHTPPEVRAAADARLAEAGLARMVAELDAETAARIDLQNPARVQRAWEVLRATGRGLARWQAETAPPLLPLSDATALVIRPDPAWLAQRIDSRFDLMMADGALDEVRAALPDWDPTLPSARAIGAPELVAHLRGEIPLDEAVAAAKLASRQYAKRQRTWFRNRMRLWHEIRLP.

Residues Met-1–Ser-25 are disordered. Gly-40–Ser-47 contributes to the ATP binding site. Thr-42–Ser-47 contacts substrate.

This sequence belongs to the IPP transferase family. Monomer. It depends on Mg(2+) as a cofactor.

It carries out the reaction adenosine(37) in tRNA + dimethylallyl diphosphate = N(6)-dimethylallyladenosine(37) in tRNA + diphosphate. Catalyzes the transfer of a dimethylallyl group onto the adenine at position 37 in tRNAs that read codons beginning with uridine, leading to the formation of N6-(dimethylallyl)adenosine (i(6)A). The polypeptide is tRNA dimethylallyltransferase (Cereibacter sphaeroides (strain ATCC 17023 / DSM 158 / JCM 6121 / CCUG 31486 / LMG 2827 / NBRC 12203 / NCIMB 8253 / ATH 2.4.1.) (Rhodobacter sphaeroides)).